The primary structure comprises 734 residues: Photosystem I P700 chlorophyll a apoprotein A2 (734 aa).

Helical transmembrane passes span 46-69 (IFAS…FHVA), 135-158 (LYTG…LHLQ), 175-199 (LNHH…HVAI), 273-291 (MAHH…GHMY), 330-353 (LHFQ…QHMY), 369-395 (AALY…IFFI), 417-439 (AIIS…LYVH), and 517-535 (FLVH…LILV). 2 residues coordinate [4Fe-4S] cluster: Cys-559 and Cys-568. Transmembrane regions (helical) follow at residues 575 to 596 (AFYL…YWHW) and 643 to 665 (LSVW…MFLI). Residues His-654, Met-662, and Tyr-670 each contribute to the chlorophyll a site. Trp-671 serves as a coordination point for phylloquinone. The chain crosses the membrane as a helical span at residues 707-727 (LVGLAHFSVGYIFTYAAFLIA).

The protein belongs to the PsaA/PsaB family. The PsaA/B heterodimer binds the P700 chlorophyll special pair and subsequent electron acceptors. PSI consists of a core antenna complex that captures photons, and an electron transfer chain that converts photonic excitation into a charge separation. The eukaryotic PSI reaction center is composed of at least 11 subunits. P700 is a chlorophyll a/chlorophyll a' dimer, A0 is one or more chlorophyll a, A1 is one or both phylloquinones and FX is a shared 4Fe-4S iron-sulfur center. serves as cofactor.

Its subcellular location is the plastid. The protein localises to the chloroplast thylakoid membrane. The enzyme catalyses reduced [plastocyanin] + hnu + oxidized [2Fe-2S]-[ferredoxin] = oxidized [plastocyanin] + reduced [2Fe-2S]-[ferredoxin]. In terms of biological role, psaA and PsaB bind P700, the primary electron donor of photosystem I (PSI), as well as the electron acceptors A0, A1 and FX. PSI is a plastocyanin-ferredoxin oxidoreductase, converting photonic excitation into a charge separation, which transfers an electron from the donor P700 chlorophyll pair to the spectroscopically characterized acceptors A0, A1, FX, FA and FB in turn. Oxidized P700 is reduced on the lumenal side of the thylakoid membrane by plastocyanin. The polypeptide is Photosystem I P700 chlorophyll a apoprotein A2 (Solanum tuberosum (Potato)).